A 673-amino-acid polypeptide reads, in one-letter code: Methionine--tRNA ligase (673 aa).

The 'HIGH' region signature appears at 15–25 (PYANGPIHLGH). Positions 146, 149, 159, and 162 each coordinate Zn(2+). Residues 332 to 336 (KMSKS) carry the 'KMSKS' region motif. Lysine 335 serves as a coordination point for ATP. The tRNA-binding domain maps to 572–673 (DFAKLDLRIA…EGAQPGMRVK (102 aa)).

It belongs to the class-I aminoacyl-tRNA synthetase family. MetG type 1 subfamily. In terms of assembly, homodimer. Requires Zn(2+) as cofactor.

It is found in the cytoplasm. The enzyme catalyses tRNA(Met) + L-methionine + ATP = L-methionyl-tRNA(Met) + AMP + diphosphate. Is required not only for elongation of protein synthesis but also for the initiation of all mRNA translation through initiator tRNA(fMet) aminoacylation. The chain is Methionine--tRNA ligase from Shewanella loihica (strain ATCC BAA-1088 / PV-4).